A 366-amino-acid chain; its full sequence is MSVSITKKFYKLDINRTEWEIPDIYQDLQPVGSGAYGQVSKAVVRGTNMHVAIKKLARPFQSAVHAKRTYRELRLLKHMDHENVIGLLDIFHPHPANGSLENFQQVYLVTHLMDADLNNIIRMQHLSDDHVQFLVYQILRGLKYIHSAGVIHRDLKPSNIAVNEDCELRILDFGLARPTENEMTGYVATRWYRAPEIMLNWMHYDQTVDIWSVGCIMAELITRRTLFPGTDHIHQLNLIMEMLGTPPAEFLKKISSESARSYIQSLPPMKGRSFKNVFKNANPLAIDLLEKMLELDAEKRITAEEALSHPYLEKYAEPSVEQTSPPYDHSFEDMDLPVDKWKELIYKEVTNFKPPPSYAQVLKDVK.

Residues 25-312 form the Protein kinase domain; sequence YQDLQPVGSG…AEEALSHPYL (288 aa). Residues 31 to 39 and lysine 54 contribute to the ATP site; that span reads VGSGAYGQV. Aspartate 154 serves as the catalytic Proton acceptor. Threonine 184 bears the Phosphothreonine mark. The TXY motif lies at 184–186; it reads TGY. Phosphotyrosine is present on tyrosine 186.

Belongs to the protein kinase superfamily. CMGC Ser/Thr protein kinase family. MAP kinase subfamily. It depends on Mg(2+) as a cofactor. Dually phosphorylated on Thr-184 and Tyr-186, which activates the enzyme.

The protein localises to the nucleus. The enzyme catalyses L-seryl-[protein] + ATP = O-phospho-L-seryl-[protein] + ADP + H(+). It catalyses the reaction L-threonyl-[protein] + ATP = O-phospho-L-threonyl-[protein] + ADP + H(+). With respect to regulation, activated by threonine and tyrosine phosphorylation by Mkk3 in response to environmental stress. Functionally, kinase involved in a signal transduction pathway. May down-regulate insect immunity gene expression after prolonged infection. This chain is Mitogen-activated protein kinase p38a, found in Drosophila melanogaster (Fruit fly).